Reading from the N-terminus, the 379-residue chain is Hydrogenase expression/formation protein HupD (379 aa).

The Fe cation site is built by C36, C64, and C67.

It belongs to the HypD family.

This Azotobacter chroococcum mcd 1 protein is Hydrogenase expression/formation protein HupD (hupD).